Reading from the N-terminus, the 354-residue chain is Guanine nucleotide-binding protein G(i) subunit alpha-3 (354 aa).

A lipid anchor (N-myristoyl glycine) is attached at Gly-2. Cys-3 is lipidated: S-palmitoyl cysteine. The G-alpha domain occupies 32 to 354 (KEVKLLLLGA…KNNLKECGLY (323 aa)). Positions 35–48 (KLLLLGAGESGKST) are G1 motif. Positions 42, 43, 44, 45, 46, 47, 48, 150, 151, 175, 176, 177, 178, 179, 180, 181, 201, 203, 269, 270, 272, 273, 325, 326, and 327 each coordinate GTP. Ser-47 is a binding site for Mg(2+). The tract at residues 173-181 (DVLRTRVKT) is G2 motif. Mg(2+) is bound at residue Thr-181. The segment at 196–205 (FKMFDVGGQR) is G3 motif. The G4 motif stretch occupies residues 265 to 272 (ILFLNKKD). The interval 324-329 (TCATDT) is G5 motif.

This sequence belongs to the G-alpha family. G(i/o/t/z) subfamily. Heterotrimeric G proteins are composed of 3 units; alpha, beta and gamma. The alpha subunit contains the guanine nucleotide binding site. GTP binding causes dissociation of the heterotrimer, liberating the individual subunits so that they can interact with downstream effector proteins. Forms a complex with CCDC88A/GIV and EGFR which leads to enhanced EGFR signaling and triggering of cell migration; ligand stimulation is required for recruitment of GNAI3 to the complex. Interacts (inactive GDP-bound form) with CCDC88A/GIV (via GBA motif); the interaction leads to activation of GNAI3. Interacts (inactive GDP-bound form) with CCDC88C/DAPLE (via GBA motif); the interaction leads to activation of GNAI3. Interacts (inactive GDP-bound form) with NUCB1 (via GBA motif) and NUCB2 (via GBA motif); the interaction leads to activation of GNAI3. Interacts (inactive GDP-bound form) with PLCD4 (via GBA motif); the interaction leads to activation of GNAI3. Interacts with INSR; the interaction is probably mediated by CCDC88A/GIV. Interacts with GPSM1. Interacts (GDP-bound form) with GPSM2 (via GoLoco domains). Does not interact with RGS2. Interacts with RGS8 and RGS10; this strongly enhances the intrinsic GTPase activity. Interacts with RGS12. Interacts with RGS16; this strongly enhances the intrinsic GTPase activity. Interacts (via active GTP- or inactive GDP-bound form) with RGS14. Interacts (via active GTP-bound form) with TRPC5 (via ANK repeats) in a homotetrameric ion channel; the interaction is direct and activates the channel activity. In terms of tissue distribution, ubiquitous.

It is found in the cytoplasm. The protein localises to the cell membrane. The protein resides in the cytoskeleton. It localises to the microtubule organizing center. Its subcellular location is the centrosome. In terms of biological role, heterotrimeric guanine nucleotide-binding proteins (G proteins) function as transducers downstream of G protein-coupled receptors (GPCRs) in numerous signaling cascades. The alpha chain contains the guanine nucleotide binding site and alternates between an active, GTP-bound state and an inactive, GDP-bound state. Signaling by an activated GPCR promotes GDP release and GTP binding. The alpha subunit has a low GTPase activity that converts bound GTP to GDP, thereby terminating the signal. Both GDP release and GTP hydrolysis are modulated by numerous regulatory proteins. Signaling is mediated via effector proteins, such as adenylate cyclase. Inhibits adenylate cyclase activity, leading to decreased intracellular cAMP levels. Stimulates the activity of receptor-regulated K(+) channels. The active GTP-bound form prevents the association of RGS14 with centrosomes and is required for the translocation of RGS14 from the cytoplasm to the plasma membrane. May play a role in cell division. The active GTP-bound form activates the calcium permeant TRPC5 ion channels. The chain is Guanine nucleotide-binding protein G(i) subunit alpha-3 (Gnai3) from Rattus norvegicus (Rat).